The sequence spans 754 residues: Lysophospholipase 3 (754 aa).

Residues 1–19 (MKVNLKLIIGSILISQAQA) form the signal peptide. Low complexity-rich tracts occupy residues 25–40 (SSGS…SETG) and 50–88 (LFGS…SSNS). A disordered region spans residues 25 to 88 (SSGSSSSSDS…DSSLFSSSNS (64 aa)). Residues asparagine 112, asparagine 156, asparagine 174, asparagine 317, asparagine 325, asparagine 354, asparagine 391, asparagine 423, asparagine 470, asparagine 510, asparagine 515, asparagine 560, asparagine 577, asparagine 597, asparagine 625, and asparagine 631 are each glycosylated (N-linked (GlcNAc...) asparagine). The PLA2c domain maps to 114–670 (TCPSKKTFIR…QEYCWTGGFK (557 aa)). The segment covering 687 to 721 (KTHTSGGTSSTTQQTSTTTGSSANGGSSSTGSSSS) has biased composition (low complexity). Positions 687-727 (KTHTSGGTSSTTQQTSTTTGSSANGGSSSTGSSSSSKKKNG) are disordered.

It belongs to the lysophospholipase family.

The protein resides in the secreted. It catalyses the reaction a 1-acyl-sn-glycero-3-phosphocholine + H2O = sn-glycerol 3-phosphocholine + a fatty acid + H(+). In terms of biological role, catalyzes the release of fatty acids from lysophospholipids. Phospholipase B may well contribute to pathogenicity by abetting the fungus in damaging and traversing host cell membranes, processes which likely increase the rapidity of disseminated infection. The chain is Lysophospholipase 3 (PLB3) from Candida albicans (Yeast).